We begin with the raw amino-acid sequence, 726 residues long: WD repeat-containing and planar cell polarity effector protein fritz homolog (726 aa).

WD repeat units follow at residues 305-343 (LRSKAISCCKNSTEDKLIVGCEDSSVILYEAHRGVTLLA) and 344-383 (QAELMPSLISCHPSGAILLVGSNQGELQVFDIALSPINIQ). Polar residues predominate over residues 642-660 (SSGSTPKHTIQQKIPNGPS). The disordered stretch occupies residues 642-717 (SSGSTPKHTI…RRQDTEDVGS (76 aa)). Over residues 672–685 (MEETEEEEEEEEEA) the composition is skewed to acidic residues. The span at 701–712 (GELREDHRRQDT) shows a compositional bias: basic and acidic residues.

This sequence belongs to the WD repeat fritz family. As to quaternary structure, component of the CPLANE (ciliogenesis and planar polarity effectors) complex, composed of INTU, FUZ and WDPCP. Interacts with CPLANE1.

It localises to the cell membrane. Its subcellular location is the cytoplasm. The protein localises to the cytoskeleton. The protein resides in the cilium axoneme. It is found in the cilium basal body. Its function is as follows. Probable effector of the planar cell polarity signaling pathway which regulates the septin cytoskeleton in both ciliogenesis and collective cell movements. Together with FUZ and WDPCP proposed to function as core component of the CPLANE (ciliogenesis and planar polarity effectors) complex involved in the recruitment of peripheral IFT-A proteins to basal bodies. Binds phosphatidylinositol 3-phosphate with highest affinity, followed by phosphatidylinositol 4-phosphate and phosphatidylinositol 5-phosphate. This is WD repeat-containing and planar cell polarity effector protein fritz homolog (Wdpcp) from Rattus norvegicus (Rat).